Here is a 216-residue protein sequence, read N- to C-terminus: Octanoyltransferase (216 aa).

The BPL/LPL catalytic domain maps to Ala-33–Ala-212. Residues Arg-72 to His-79, Ser-139 to Gly-141, and Gly-152 to Ala-154 contribute to the substrate site. Cys-170 functions as the Acyl-thioester intermediate in the catalytic mechanism.

The protein belongs to the LipB family.

The protein resides in the cytoplasm. The enzyme catalyses octanoyl-[ACP] + L-lysyl-[protein] = N(6)-octanoyl-L-lysyl-[protein] + holo-[ACP] + H(+). Its pathway is protein modification; protein lipoylation via endogenous pathway; protein N(6)-(lipoyl)lysine from octanoyl-[acyl-carrier-protein]: step 1/2. Its function is as follows. Catalyzes the transfer of endogenously produced octanoic acid from octanoyl-acyl-carrier-protein onto the lipoyl domains of lipoate-dependent enzymes. Lipoyl-ACP can also act as a substrate although octanoyl-ACP is likely to be the physiological substrate. In Saccharophagus degradans (strain 2-40 / ATCC 43961 / DSM 17024), this protein is Octanoyltransferase.